Here is a 591-residue protein sequence, read N- to C-terminus: L-fucose isomerase (591 aa).

Catalysis depends on proton acceptor residues Glu337 and Asp361. Mn(2+) is bound by residues Glu337, Asp361, and His528.

This sequence belongs to the L-fucose isomerase family. Homohexamer. Requires Mn(2+) as cofactor.

It localises to the cytoplasm. The catalysed reaction is L-fucose = L-fuculose. The protein operates within carbohydrate degradation; L-fucose degradation; L-lactaldehyde and glycerone phosphate from L-fucose: step 1/3. In terms of biological role, converts the aldose L-fucose into the corresponding ketose L-fuculose. This chain is L-fucose isomerase, found in Citrobacter koseri (strain ATCC BAA-895 / CDC 4225-83 / SGSC4696).